A 48-amino-acid chain; its full sequence is MPQLVPFYFINILSFGFLIFTVLLYISSVYVLPRYNELFISRSIISSL.

Residues 4-24 (LVPFYFINILSFGFLIFTVLL) form a helical membrane-spanning segment.

Belongs to the ATPase protein 8 family. F-type ATPases have 2 components, CF(1) - the catalytic core - and CF(0) - the membrane proton channel.

It localises to the mitochondrion membrane. Its function is as follows. Mitochondrial membrane ATP synthase (F(1)F(0) ATP synthase or Complex V) produces ATP from ADP in the presence of a proton gradient across the membrane which is generated by electron transport complexes of the respiratory chain. F-type ATPases consist of two structural domains, F(1) - containing the extramembraneous catalytic core and F(0) - containing the membrane proton channel, linked together by a central stalk and a peripheral stalk. During catalysis, ATP synthesis in the catalytic domain of F(1) is coupled via a rotary mechanism of the central stalk subunits to proton translocation. Part of the complex F(0) domain. Minor subunit located with subunit a in the membrane. This is ATP synthase protein 8 (atp8) from Schizosaccharomyces pombe (strain 972 / ATCC 24843) (Fission yeast).